A 517-amino-acid polypeptide reads, in one-letter code: Steroid 17-alpha-hydroxylase/17,20 lyase (517 aa).

Cys451 lines the heme pocket.

Belongs to the cytochrome P450 family. It depends on heme as a cofactor.

The protein localises to the membrane. It carries out the reaction a C21-steroid + reduced [NADPH--hemoprotein reductase] + O2 = a 17alpha-hydroxy-C21-steroid + oxidized [NADPH--hemoprotein reductase] + H2O + H(+). It catalyses the reaction 17alpha-hydroxyprogesterone + reduced [NADPH--hemoprotein reductase] + O2 = androst-4-ene-3,17-dione + acetate + oxidized [NADPH--hemoprotein reductase] + H2O + 2 H(+). The catalysed reaction is 17alpha-hydroxypregnenolone + reduced [NADPH--hemoprotein reductase] + O2 = 3beta-hydroxyandrost-5-en-17-one + acetate + oxidized [NADPH--hemoprotein reductase] + H2O + 2 H(+). It participates in lipid metabolism; steroid biosynthesis. Functionally, conversion of pregnenolone and progesterone to their 17-alpha-hydroxylated products and subsequently to dehydroepiandrosterone (DHEA) and androstenedione. Catalyzes both the 17-alpha-hydroxylation and the 17,20-lyase reaction. The chain is Steroid 17-alpha-hydroxylase/17,20 lyase (cyp17a1) from Oryzias latipes (Japanese rice fish).